A 310-amino-acid chain; its full sequence is Malate dehydrogenase (310 aa).

Residues 7-12 and Asp32 contribute to the NAD(+) site; that span reads GAGHVG. Residues Arg81 and Arg87 each coordinate substrate. NAD(+)-binding positions include Asn94 and 117–119; that span reads VSN. Substrate is bound by residues Asn119 and Arg150. Residue His174 is the Proton acceptor of the active site.

Belongs to the LDH/MDH superfamily. MDH type 3 family.

It carries out the reaction (S)-malate + NAD(+) = oxaloacetate + NADH + H(+). In terms of biological role, catalyzes the reversible oxidation of malate to oxaloacetate. In Chlorobium phaeobacteroides (strain BS1), this protein is Malate dehydrogenase.